Here is a 232-residue protein sequence, read N- to C-terminus: Small ribosomal subunit protein uS3 (232 aa).

The KH type-2 domain maps to 39–107 (VRQFLTKELS…PAQINIAEVR (69 aa)).

Belongs to the universal ribosomal protein uS3 family. As to quaternary structure, part of the 30S ribosomal subunit. Forms a tight complex with proteins S10 and S14.

Binds the lower part of the 30S subunit head. Binds mRNA in the 70S ribosome, positioning it for translation. This is Small ribosomal subunit protein uS3 from Sodalis glossinidius (strain morsitans).